A 593-amino-acid chain; its full sequence is Cryptochrome-2 (593 aa).

Positions Ala22 to Leu151 constitute a Photolyase/cryptochrome alpha/beta domain. Lys30 participates in a covalent cross-link: Glycyl lysine isopeptide (Lys-Gly) (interchain with G-Cter in ubiquitin). Ser90 is subject to Phosphoserine. Residues Lys126 and Lys242 each participate in a glycyl lysine isopeptide (Lys-Gly) (interchain with G-Cter in ubiquitin) cross-link. Position 266 is a phosphoserine; by MAPK (Ser266). Ser271 serves as a coordination point for FAD. The residue at position 299 (Ser299) is a Phosphoserine. Gln308 provides a ligand contact to FAD. A Glycyl lysine isopeptide (Lys-Gly) (interchain with G-Cter in ubiquitin) cross-link involves residue Lys348. Residues His374 and Asp406–Asp408 contribute to the FAD site. Residues Trp390–Ile489 form a required for inhibition of CLOCK-BMAL1-mediated transcription region. Residues Lys475 and Lys504 each participate in a glycyl lysine isopeptide (Lys-Gly) (interchain with G-Cter in ubiquitin) cross-link. Residues Pro532–Ala593 form a disordered region. Residues Ser537 to Gly548 show a composition bias toward low complexity. Ser554 is modified (phosphoserine; by GSK3-beta). Ser558 bears the Phosphoserine; by DYRK1A and MAPK mark.

This sequence belongs to the DNA photolyase class-1 family. As to quaternary structure, component of the circadian core oscillator, which includes the CRY proteins, CLOCK or NPAS2, BMAL1 or BMAL2, CSNK1D and/or CSNK1E, TIMELESS, and the PER proteins. Interacts with TIMELESS. Interacts directly with PER1, PER2 and PER3; interaction with PER2 inhibits its ubiquitination and vice versa. Interacts with CLOCK-BMAL1. Interacts with CLOCK. Interacts with BMAL1. Interacts with NFIL3. Interacts with FBXL3. Interacts with FBXL21. FBXL3, PER2 and the cofactor FAD compete for overlapping binding sites. FBXL3 cannot bind CRY2 that interacts already with PER2 or that contains bound FAD. Interacts with PPP5C (via TPR repeats); the interaction down-regulates the PPP5C phosphatase activity on CSNK1E. Interacts with nuclear receptors AR and NR3C1/GR; the interaction is ligand dependent. Interacts with PRKDC and CIART. Interacts with ISCA1 (in vitro). Interacts with DDB1, USP7 and TARDBP. Interacts with HNF4A. Interacts with PPARA. Interacts with PPARD (via domain NR LBD) and NR1I2 (via domain NR LBD) in a ligand-dependent manner. Interacts with PPARG, NR1I3 and VDR in a ligand-dependent manner. Requires FAD as cofactor. (6R)-5,10-methylene-5,6,7,8-tetrahydrofolate serves as cofactor. Post-translationally, phosphorylation on Ser-266 by MAPK is important for the inhibition of CLOCK-BMAL1-mediated transcriptional activity. Phosphorylation by CSKNE requires interaction with PER1 or PER2. Phosphorylated in a circadian manner at Ser-554 and Ser-558 in the suprachiasmatic nucleus (SCN) and liver. Phosphorylation at Ser-558 by DYRK1A promotes subsequent phosphorylation at Ser-554 by GSK3-beta: the two-step phosphorylation at the neighboring Ser residues leads to its proteasomal degradation. In terms of processing, ubiquitinated by the SCF(FBXL3) and SCF(FBXL21) complexes, regulating the balance between degradation and stabilization. The SCF(FBXL3) complex is mainly nuclear and mediates ubiquitination and subsequent degradation of CRY2. In contrast, cytoplasmic SCF(FBXL21) complex-mediated ubiquitination leads to stabilize CRY2 and counteract the activity of the SCF(FBXL3) complex. The SCF(FBXL3) and SCF(FBXL21) complexes probably mediate ubiquitination at different Lys residues. The SCF(FBXL3) complex recognizes and binds CRY2 phosphorylated at Ser-554 and Ser-558. Ubiquitination may be inhibited by PER2. Deubiquitinated by USP7. Expressed in all tissues examined including fetal brain, fibroblasts, heart, brain, placenta, lung, liver, skeletal muscle, kidney, pancreas, spleen, thymus, prostate, testis, ovary, small intestine, colon and leukocytes. Highest levels in heart and skeletal muscle.

It localises to the cytoplasm. It is found in the nucleus. Its activity is regulated as follows. KL001 (N-[3-(9H-carbazol-9-yl)-2-hydroxypropyl]-N-(2-furanylmethyl)-methanesulfonamide) binds to CRY1 and stabilizes it by inhibiting FBXL3- and ubiquitin-dependent degradation of CRY1 resulting in lengthening of the circadian periods. Transcriptional repressor which forms a core component of the circadian clock. The circadian clock, an internal time-keeping system, regulates various physiological processes through the generation of approximately 24 hour circadian rhythms in gene expression, which are translated into rhythms in metabolism and behavior. It is derived from the Latin roots 'circa' (about) and 'diem' (day) and acts as an important regulator of a wide array of physiological functions including metabolism, sleep, body temperature, blood pressure, endocrine, immune, cardiovascular, and renal function. Consists of two major components: the central clock, residing in the suprachiasmatic nucleus (SCN) of the brain, and the peripheral clocks that are present in nearly every tissue and organ system. Both the central and peripheral clocks can be reset by environmental cues, also known as Zeitgebers (German for 'timegivers'). The predominant Zeitgeber for the central clock is light, which is sensed by retina and signals directly to the SCN. The central clock entrains the peripheral clocks through neuronal and hormonal signals, body temperature and feeding-related cues, aligning all clocks with the external light/dark cycle. Circadian rhythms allow an organism to achieve temporal homeostasis with its environment at the molecular level by regulating gene expression to create a peak of protein expression once every 24 hours to control when a particular physiological process is most active with respect to the solar day. Transcription and translation of core clock components (CLOCK, NPAS2, BMAL1, BMAL2, PER1, PER2, PER3, CRY1 and CRY2) plays a critical role in rhythm generation, whereas delays imposed by post-translational modifications (PTMs) are important for determining the period (tau) of the rhythms (tau refers to the period of a rhythm and is the length, in time, of one complete cycle). A diurnal rhythm is synchronized with the day/night cycle, while the ultradian and infradian rhythms have a period shorter and longer than 24 hours, respectively. Disruptions in the circadian rhythms contribute to the pathology of cardiovascular diseases, cancer, metabolic syndromes and aging. A transcription/translation feedback loop (TTFL) forms the core of the molecular circadian clock mechanism. Transcription factors, CLOCK or NPAS2 and BMAL1 or BMAL2, form the positive limb of the feedback loop, act in the form of a heterodimer and activate the transcription of core clock genes and clock-controlled genes (involved in key metabolic processes), harboring E-box elements (5'-CACGTG-3') within their promoters. The core clock genes: PER1/2/3 and CRY1/2 which are transcriptional repressors form the negative limb of the feedback loop and interact with the CLOCK|NPAS2-BMAL1|BMAL2 heterodimer inhibiting its activity and thereby negatively regulating their own expression. This heterodimer also activates nuclear receptors NR1D1/2 and RORA/B/G, which form a second feedback loop and which activate and repress BMAL1 transcription, respectively. CRY1 and CRY2 have redundant functions but also differential and selective contributions at least in defining the pace of the SCN circadian clock and its circadian transcriptional outputs. Less potent transcriptional repressor in cerebellum and liver than CRY1, though less effective in lengthening the period of the SCN oscillator. Seems to play a critical role in tuning SCN circadian period by opposing the action of CRY1. With CRY1, dispensable for circadian rhythm generation but necessary for the development of intercellular networks for rhythm synchrony. May mediate circadian regulation of cAMP signaling and gluconeogenesis by blocking glucagon-mediated increases in intracellular cAMP concentrations and in CREB1 phosphorylation. Besides its role in the maintenance of the circadian clock, is also involved in the regulation of other processes. Plays a key role in glucose and lipid metabolism modulation, in part, through the transcriptional regulation of genes involved in these pathways, such as LEP or ACSL4. Represses glucocorticoid receptor NR3C1/GR-induced transcriptional activity by binding to glucocorticoid response elements (GREs). Represses the CLOCK-BMAL1 induced transcription of BHLHE40/DEC1. Represses the CLOCK-BMAL1 induced transcription of NAMPT. Represses PPARD and its target genes in the skeletal muscle and limits exercise capacity. Represses the transcriptional activity of NR1I2. In Homo sapiens (Human), this protein is Cryptochrome-2 (CRY2).